We begin with the raw amino-acid sequence, 245 residues long: 1-(5-phosphoribosyl)-5-[(5-phosphoribosylamino)methylideneamino] imidazole-4-carboxamide isomerase (245 aa).

The active-site Proton acceptor is Asp7. The Proton donor role is filled by Asp129.

This sequence belongs to the HisA/HisF family.

It is found in the cytoplasm. The enzyme catalyses 1-(5-phospho-beta-D-ribosyl)-5-[(5-phospho-beta-D-ribosylamino)methylideneamino]imidazole-4-carboxamide = 5-[(5-phospho-1-deoxy-D-ribulos-1-ylimino)methylamino]-1-(5-phospho-beta-D-ribosyl)imidazole-4-carboxamide. It functions in the pathway amino-acid biosynthesis; L-histidine biosynthesis; L-histidine from 5-phospho-alpha-D-ribose 1-diphosphate: step 4/9. The chain is 1-(5-phosphoribosyl)-5-[(5-phosphoribosylamino)methylideneamino] imidazole-4-carboxamide isomerase from Salmonella arizonae (strain ATCC BAA-731 / CDC346-86 / RSK2980).